Reading from the N-terminus, the 33-residue chain is Potassium channel toxin alpha-KTx 24.1 (33 aa).

4 disulfide bridges follow: Cys4-Cys23, Cys9-Cys28, Cys13-Cys30, and Cys18-Cys33.

This sequence belongs to the short scorpion toxin superfamily. Potassium channel inhibitor family. Alpha-KTx 24 subfamily. In terms of processing, contains 4 disulfide bonds. As to expression, expressed by the venom gland.

It is found in the secreted. Functionally, reversibly blocks voltage-gated potassium channels Kv1.2/KCNA2, Kv1.3/KCNA3 and, weakly, Shaker B. This Pandinus imperator (Emperor scorpion) protein is Potassium channel toxin alpha-KTx 24.1.